We begin with the raw amino-acid sequence, 147 residues long: Transthyretin (147 aa).

The signal sequence occupies residues 1-20 (MASFRLLLLCLAGLVFVSEA). The residue at position 30 (C30) is a Sulfocysteine. K35 contributes to the L-thyroxine binding site. E62 is subject to 4-carboxyglutamate. At S72 the chain carries Phosphoserine. Residue E74 participates in L-thyroxine binding. The N-linked (GlcNAc...) asparagine glycan is linked to N118. Position 137 (S137) interacts with L-thyroxine.

The protein belongs to the transthyretin family. In terms of assembly, homotetramer. Dimer of dimers. In the homotetramer, subunits assemble around a central channel that can accommodate two ligand molecules. Interacts with RBP4. Post-translationally, sulfonation of the reactive cysteine Cys-30 enhances the stability of the native conformation of TTR, avoiding misassembly of the protein leading to amyloid formation. In terms of tissue distribution, highly expressed in the choroid plexus.

The protein localises to the secreted. Its function is as follows. Thyroid hormone-binding protein. Probably transports thyroxine from the bloodstream to the brain. This Ovis aries (Sheep) protein is Transthyretin (TTR).